Consider the following 250-residue polypeptide: 3-deoxy-manno-octulosonate cytidylyltransferase (250 aa).

It belongs to the KdsB family.

Its subcellular location is the cytoplasm. The enzyme catalyses 3-deoxy-alpha-D-manno-oct-2-ulosonate + CTP = CMP-3-deoxy-beta-D-manno-octulosonate + diphosphate. The protein operates within nucleotide-sugar biosynthesis; CMP-3-deoxy-D-manno-octulosonate biosynthesis; CMP-3-deoxy-D-manno-octulosonate from 3-deoxy-D-manno-octulosonate and CTP: step 1/1. It participates in bacterial outer membrane biogenesis; lipopolysaccharide biosynthesis. In terms of biological role, activates KDO (a required 8-carbon sugar) for incorporation into bacterial lipopolysaccharide in Gram-negative bacteria. The chain is 3-deoxy-manno-octulosonate cytidylyltransferase from Syntrophotalea carbinolica (strain DSM 2380 / NBRC 103641 / GraBd1) (Pelobacter carbinolicus).